We begin with the raw amino-acid sequence, 97 residues long: Small ribosomal subunit protein bS20 (97 aa).

This sequence belongs to the bacterial ribosomal protein bS20 family.

Functionally, binds directly to 16S ribosomal RNA. The chain is Small ribosomal subunit protein bS20 from Prochlorococcus marinus (strain AS9601).